Consider the following 440-residue polypeptide: Light-independent protochlorophyllide reductase subunit B (440 aa).

Residue Asp-36 participates in [4Fe-4S] cluster binding. Lys-427 to Asp-428 serves as a coordination point for substrate.

Belongs to the ChlB/BchB/BchZ family. In terms of assembly, protochlorophyllide reductase is composed of three subunits; ChlL, ChlN and ChlB. Forms a heterotetramer of two ChlB and two ChlN subunits. Requires [4Fe-4S] cluster as cofactor.

It localises to the plastid. Its subcellular location is the cyanelle. It catalyses the reaction chlorophyllide a + oxidized 2[4Fe-4S]-[ferredoxin] + 2 ADP + 2 phosphate = protochlorophyllide a + reduced 2[4Fe-4S]-[ferredoxin] + 2 ATP + 2 H2O. Its pathway is porphyrin-containing compound metabolism; chlorophyll biosynthesis (light-independent). In terms of biological role, component of the dark-operative protochlorophyllide reductase (DPOR) that uses Mg-ATP and reduced ferredoxin to reduce ring D of protochlorophyllide (Pchlide) to form chlorophyllide a (Chlide). This reaction is light-independent. The NB-protein (ChlN-ChlB) is the catalytic component of the complex. This Cyanophora paradoxa protein is Light-independent protochlorophyllide reductase subunit B.